Here is a 426-residue protein sequence, read N- to C-terminus: MYVLKNGQVLNESGELENKDVLIQNGKVNLIADSIEVTSGEEFDATGKLIAPGFIDVHVHLREPGGEHKETILTGTKAAARGGYTTICSMPNTKPVPDSKEVMNSLQAKIKETAEVRVLPYASITTSLGTDELVDFEALKEAGAFAFTDDGVGVQLAGTMYEAMKRAAALDMAIVAHCEDNSLIYGGVVHDGIFAEKEGLKGIPNIAESVQIARDVLLAEAAGCHYHVCHISTKESVRVVRDAKRAGIRVTAEVSPHHLILDEEDIPGNDGNWKMNPPLRSKEDRAALLEGLLDGTIDFIATDHAPHAAEEKNVPMEQAAFGIVGLETAFPLLYTHFVKTNEWTLKQLIDWMTVKPAECFKLPYGKLEEGAVADIVVLDLEKEATIDPATFYSKGKNTPFVGETCIGWPVATFAEGELVYNEGENK.

Positions 58 and 60 each coordinate Zn(2+). Substrate-binding positions include 60–62 (HLR) and N92. Residues D150, H177, and H230 each contribute to the Zn(2+) site. N276 contributes to the substrate binding site. D303 contributes to the Zn(2+) binding site. D303 is a catalytic residue. Residues H307 and 321 to 322 (FG) each bind substrate.

It belongs to the metallo-dependent hydrolases superfamily. DHOase family. Class I DHOase subfamily. Zn(2+) serves as cofactor.

The enzyme catalyses (S)-dihydroorotate + H2O = N-carbamoyl-L-aspartate + H(+). The protein operates within pyrimidine metabolism; UMP biosynthesis via de novo pathway; (S)-dihydroorotate from bicarbonate: step 3/3. In terms of biological role, catalyzes the reversible cyclization of carbamoyl aspartate to dihydroorotate. In Listeria innocua serovar 6a (strain ATCC BAA-680 / CLIP 11262), this protein is Dihydroorotase.